Here is a 462-residue protein sequence, read N- to C-terminus: Argininosuccinate lyase (462 aa).

Belongs to the lyase 1 family. Argininosuccinate lyase subfamily.

The protein resides in the cytoplasm. It catalyses the reaction 2-(N(omega)-L-arginino)succinate = fumarate + L-arginine. It participates in amino-acid biosynthesis; L-arginine biosynthesis; L-arginine from L-ornithine and carbamoyl phosphate: step 3/3. The chain is Argininosuccinate lyase from Bacillus cereus (strain AH820).